The primary structure comprises 167 residues: Phosphopantetheine adenylyltransferase (167 aa).

Thr-10 provides a ligand contact to substrate. ATP contacts are provided by residues 10–11 (TF) and His-18. 2 residues coordinate substrate: Ala-77 and Arg-91. Residues 92–94 (GLR), Glu-102, and 127–133 (YSFISSS) contribute to the ATP site.

The protein belongs to the bacterial CoaD family. Homohexamer. Requires Mg(2+) as cofactor.

It localises to the cytoplasm. The enzyme catalyses (R)-4'-phosphopantetheine + ATP + H(+) = 3'-dephospho-CoA + diphosphate. It participates in cofactor biosynthesis; coenzyme A biosynthesis; CoA from (R)-pantothenate: step 4/5. Functionally, reversibly transfers an adenylyl group from ATP to 4'-phosphopantetheine, yielding dephospho-CoA (dPCoA) and pyrophosphate. This is Phosphopantetheine adenylyltransferase from Thermomicrobium roseum (strain ATCC 27502 / DSM 5159 / P-2).